The following is a 120-amino-acid chain: Large ribosomal subunit protein uL22 (120 aa).

The disordered stretch occupies residues 1–25 (MFVNKKYTAKGKNLPSSPKKVRPIA).

Belongs to the universal ribosomal protein uL22 family. In terms of assembly, part of the 50S ribosomal subunit.

In terms of biological role, this protein binds specifically to 23S rRNA; its binding is stimulated by other ribosomal proteins, e.g. L4, L17, and L20. It is important during the early stages of 50S assembly. It makes multiple contacts with different domains of the 23S rRNA in the assembled 50S subunit and ribosome. Functionally, the globular domain of the protein is located near the polypeptide exit tunnel on the outside of the subunit, while an extended beta-hairpin is found that lines the wall of the exit tunnel in the center of the 70S ribosome. The polypeptide is Large ribosomal subunit protein uL22 (Borrelia recurrentis (strain A1)).